The chain runs to 46 residues: GPSSCKADEEPCEYHADCCNCCLSGICAPSTNWILPGCSTSSFFKI.

4-hydroxyproline is present on residues Pro-2 and Pro-11. 4 disulfides stabilise this stretch: Cys-5–Cys-19, Cys-12–Cys-22, Cys-18–Cys-27, and Cys-21–Cys-38. At Pro-29 the chain carries 4-hydroxyproline. Position 33 is a 6'-bromotryptophan (Trp-33). At Phe-44 the chain carries D-phenylalanine.

This sequence belongs to the conotoxin I1 superfamily. As to expression, expressed by the venom duct.

The protein localises to the secreted. In terms of biological role, iota-conotoxins bind to voltage-gated sodium channels (Nav) and act as agonists by shifting the voltage-dependence of activation to more hyperpolarized levels. Produces general excitatory symptoms. This Conus figulinus (Fig cone) protein is Iota-conotoxin-like Fi11.8.